The chain runs to 501 residues: Cytochrome P450 81F4 (501 aa).

Residue Lys245 forms a Glycyl lysine isopeptide (Lys-Gly) (interchain with G-Cter in ubiquitin) linkage. The chain crosses the membrane as a helical span at residues 285 to 305; it reads IIIKGLMLGIMVASSETSALT. Cys435 serves as a coordination point for heme.

It belongs to the cytochrome P450 family. Requires heme as cofactor.

The protein localises to the membrane. The protein operates within secondary metabolite biosynthesis. Its function is as follows. Involved in indole glucosinolate biosynthesis. Catalyzes hydroxylation reactions of the glucosinolate indole ring. Converts indol-3-yl-methylglucosinolate (I3M) to 1-hydroxy-indol-3-yl-methylglucosinolate (1OH-I3M) intermediate. This hydroxy intermediates is converted to 1-methoxy-indol-3-yl-methylglucosinolate (1MO-I3M) by indole glucosinolate methyltransferase 1 and 2 (IGMT1 and IGMT2). The protein is Cytochrome P450 81F4 of Arabidopsis thaliana (Mouse-ear cress).